The chain runs to 438 residues: Innexin inx7 (438 aa).

Topologically, residues 1 to 23 (MLNTFSSVRQYLKFDLTRVVIDN) are cytoplasmic. The chain crosses the membrane as a helical span at residues 24-44 (IVFKLHYRWTFVILLVATLLI). Topologically, residues 45 to 58 (TSRQYIGEHIQCLS) are extracellular. The chain crosses the membrane as a helical span at residues 59 to 79 (DGVVSPVINTFCFFTPTFTVV). Residues 80 to 112 (RDQNQTAYRPGSEPPGIGAFDPEKDTIKRHAYY) are Cytoplasmic-facing. The helical transmembrane segment at 113–133 (QWVPFVLFFQALCFYIPHALW) threads the bilayer. Over 134-283 (KSWEGGRIKA…VMALNIMNEK (150 aa)) the chain is Extracellular. A helical membrane pass occupies residues 284–304 (IYIILWFWYAFLLIVTVLGLL). At 305–438 (WRILTLCFYR…STSDMAKLPV (134 aa)) the chain is on the cytoplasmic side. Disordered stretches follow at residues 381–402 (NDVN…PELS) and 415–438 (RRNG…KLPV). Over residues 418–431 (GSPSAGGAQGPSTS) the composition is skewed to low complexity.

It belongs to the pannexin family. In terms of tissue distribution, expressed around gut lobes in embryonic stages 15-17.

The protein localises to the cell membrane. It is found in the cell junction. Its subcellular location is the gap junction. Structural components of the gap junctions. This chain is Innexin inx7 (Inx7), found in Drosophila melanogaster (Fruit fly).